A 111-amino-acid polypeptide reads, in one-letter code: P antigen family member 2 (111 aa).

Positions M1–P66 are disordered. Polar residues predominate over residues R8–V24.

It belongs to the GAGE family.

This is P antigen family member 2 (PAGE2) from Homo sapiens (Human).